Here is a 935-residue protein sequence, read N- to C-terminus: Protein translocase subunit SecA (935 aa).

Residues glutamine 90, 108 to 112 (GEGKT), and aspartate 504 contribute to the ATP site.

Belongs to the SecA family. Monomer and homodimer. Part of the essential Sec protein translocation apparatus which comprises SecA, SecYEG and auxiliary proteins SecDF. Other proteins may also be involved.

It is found in the cell inner membrane. Its subcellular location is the cellular thylakoid membrane. The protein localises to the cytoplasm. It carries out the reaction ATP + H2O + cellular proteinSide 1 = ADP + phosphate + cellular proteinSide 2.. Its function is as follows. Part of the Sec protein translocase complex. Interacts with the SecYEG preprotein conducting channel. Has a central role in coupling the hydrolysis of ATP to the transfer of proteins into and across the cell membrane, serving as an ATP-driven molecular motor driving the stepwise translocation of polypeptide chains across the membrane. Probably participates in protein translocation into and across both the cytoplasmic and thylakoid membranes in cyanobacterial cells. This Gloeothece citriformis (strain PCC 7424) (Cyanothece sp. (strain PCC 7424)) protein is Protein translocase subunit SecA.